The following is a 265-amino-acid chain: Beta-lactamase OXA-48 (265 aa).

An N-terminal signal peptide occupies residues 1-22; it reads MRVLALSAVFLVASIIGMPAVA. S70 serves as the catalytic Acyl-ester intermediate. Positions 70, 73, 118, and 250 each coordinate a beta-lactam. At K73 the chain carries N6-carboxylysine.

This sequence belongs to the class-D beta-lactamase family. As to quaternary structure, monomer. Dimer. In terms of processing, carboxylated on the epsilon-amino group of a lysine, with the resulting carbamate functional group serving as a general base. Probably N-carboxylated at Lys-73 at neutral pH in vivo and undergoes complete N-decarboxylation, at pH 4.1, in vitro.

The catalysed reaction is a beta-lactam + H2O = a substituted beta-amino acid. Its activity is regulated as follows. Inhibited by avibactam, related diazabicyclooctane (DBO) derivatives and by bicyclic boronic acids, via a covalent binding to Ser-70. Inhibited by chloride, bromide and iodide ions. Not inhibited by the beta-lactamase-blocking agents, clavulanic acid or tazobactam. Class D beta-lactamase which confers resistance to the beta-lactam antibiotics, including amoxicillin, and moderate resistance to cephalosporins and carbapenems such as cephalothin and imipenem; in the DH10B strain of E.coli. Acts via hydrolysis of the beta-lactam ring. Has oxacillin-, cephalothin- and imipenem-hydrolyzing activities. This chain is Beta-lactamase OXA-48, found in Klebsiella pneumoniae.